The sequence spans 269 residues: Glutamate 5-kinase 2 (269 aa).

ATP is bound at residue K16. Substrate contacts are provided by S57, D144, and N156. 218-224 (SGGMISK) provides a ligand contact to ATP.

Belongs to the glutamate 5-kinase family.

The protein resides in the cytoplasm. The enzyme catalyses L-glutamate + ATP = L-glutamyl 5-phosphate + ADP. The protein operates within amino-acid biosynthesis; L-proline biosynthesis; L-glutamate 5-semialdehyde from L-glutamate: step 1/2. In terms of biological role, catalyzes the transfer of a phosphate group to glutamate to form L-glutamate 5-phosphate. The protein is Glutamate 5-kinase 2 of Rhizobium meliloti (strain 1021) (Ensifer meliloti).